The chain runs to 117 residues: MTHAHITSWLITVILFFIAVSLQRSGASKAKIVQMALRLFYIFTVITGGLLLHSIASISILYIIKAIVGLWLIGAMEMVLSGMKKGKNTNVAWIQWIVAFVLVLFLGFMLPLGFDLF.

Helical transmembrane passes span threonine 2 to leucine 22, isoleucine 32 to leucine 52, isoleucine 55 to alanine 75, and isoleucine 97 to phenylalanine 117.

It belongs to the UPF0344 family.

It is found in the cell membrane. This Geobacillus sp. (strain WCH70) protein is UPF0344 protein GWCH70_0687.